A 312-amino-acid chain; its full sequence is D-apiose import binding protein (312 aa).

The N-terminal stretch at 1–26 (MKASKRWVALAAATLTLFTATGTAQA) is a signal peptide. D-apiofuranose is bound by residues N39, 115 to 116 (DR), 162 to 164 (DIN), R168, N218, D243, and Q263.

Belongs to the bacterial solute-binding protein 2 family.

Its subcellular location is the periplasm. Part of an ABC transporter complex involved in D-apiose import. Binds D-apiose, D-ribose and D-ribulose. In Paraburkholderia graminis (strain ATCC 700544 / DSM 17151 / LMG 18924 / NCIMB 13744 / C4D1M), this protein is D-apiose import binding protein.